The primary structure comprises 223 residues: MQRAARPLVSVSDLDADKAAALKLIPIPSALEARLDAYVALLQQWQAKTNLVAPSTLPQLWTRHVADSLQLVSLMPHARRWLDFGSGGGFPGVVLACAMADVGGHVTLVERIAKKAAFLREALRVAGAPGTVILADIGDNVDRFPQALDCITARAVAPLHQLIGFAEPLMTPGTTKALFLKGQDVDAELTETTKYWKFQPKLHASVTGGQGWIVEIDHIERRT.

S-adenosyl-L-methionine-binding residues include Gly85, Phe90, and Arg154.

It belongs to the methyltransferase superfamily. RNA methyltransferase RsmG family.

The protein localises to the cytoplasm. It carries out the reaction guanosine(527) in 16S rRNA + S-adenosyl-L-methionine = N(7)-methylguanosine(527) in 16S rRNA + S-adenosyl-L-homocysteine. Specifically methylates the N7 position of guanine in position 527 of 16S rRNA. This is Ribosomal RNA small subunit methyltransferase G from Rhodopseudomonas palustris (strain ATCC BAA-98 / CGA009).